Consider the following 347-residue polypeptide: MSAPARVLVVDDSPTMRGLITAVLSSDPEVSVIGQAGDALEAREAIKRLNPDVVTLDIEMPNMNGLDFLEKIMTLRPMPVIMVSTMTHRGAEATLAALEIGAFDCVGKPGPGEHRPFGDLAEKVKAAARTQRQFSQPAAAVAPPPSVADFRVGRKIVAIGSSTGGVEALIAVLQKFPANCPPTVITQHMPPTFTKSFAERLNRLCAPVVQEATDGARLEIGKIYLAPGGERHLQVSGGSAPCCRLVDRAPVNGHRPSVDVLFDSVAELAGRNAVGVILTGMGRDGAAGLLKMRHAGARTLGQTEKTCVVYGMPRVAHELGAVEQQLPLTAIGEEILKLTAARKEGTE.

Residues 6–123 (RVLVVDDSPT…HRPFGDLAEK (118 aa)) enclose the Response regulatory domain. The residue at position 57 (Asp57) is a 4-aspartylphosphate. A CheB-type methylesterase domain is found at 150–342 (FRVGRKIVAI…EEILKLTAAR (193 aa)). Residues Ser162, His188, and Asp284 contribute to the active site.

Belongs to the CheB family. Post-translationally, phosphorylated by CheA. Phosphorylation of the N-terminal regulatory domain activates the methylesterase activity.

It is found in the cytoplasm. It catalyses the reaction [protein]-L-glutamate 5-O-methyl ester + H2O = L-glutamyl-[protein] + methanol + H(+). It carries out the reaction L-glutaminyl-[protein] + H2O = L-glutamyl-[protein] + NH4(+). Involved in chemotaxis. Part of a chemotaxis signal transduction system that modulates chemotaxis in response to various stimuli. Catalyzes the demethylation of specific methylglutamate residues introduced into the chemoreceptors (methyl-accepting chemotaxis proteins or MCP) by CheR. Also mediates the irreversible deamidation of specific glutamine residues to glutamic acid. The polypeptide is Protein-glutamate methylesterase/protein-glutamine glutaminase (Rhizobium etli (strain ATCC 51251 / DSM 11541 / JCM 21823 / NBRC 15573 / CFN 42)).